Reading from the N-terminus, the 263-residue chain is (R)-S-adenosyl-L-methionine hydrolase (263 aa).

Adenosine is bound by residues aspartate 18, aspartate 82, and asparagine 181. (R)-S-adenosyl-L-methionine contacts are provided by asparagine 181, tyrosine 221, serine 234, glutamate 239, and methionine 244.

The protein belongs to the SAM hydrolase / SAM-dependent halogenase family. Homotrimer.

The enzyme catalyses (R)-S-adenosyl-L-methionine + H2O = adenosine + L-methionine + H(+). In terms of biological role, catalyzes the hydrolysis of S-adenosyl-L-methionine (SAM) into adenosine and L-methionine. Does not have chlorinase or fluorinase activity. This Methanocaldococcus jannaschii (strain ATCC 43067 / DSM 2661 / JAL-1 / JCM 10045 / NBRC 100440) (Methanococcus jannaschii) protein is (R)-S-adenosyl-L-methionine hydrolase.